The primary structure comprises 374 residues: C-X-C chemokine receptor type 5 (374 aa).

Residues 1-57 (MNSPISLDMGAITYNMDDLYKELAIYSNSTEIPLQDSIFCSTEEGPLLTSFKTIFMP) lie on the Extracellular side of the membrane. Residue Asn-28 is glycosylated (N-linked (GlcNAc...) asparagine). A helical membrane pass occupies residues 58–78 (VAYSLIFLLGMMGNILVLVIL). The Cytoplasmic portion of the chain corresponds to 79–90 (ERHRHTRSSTET). A helical transmembrane segment spans residues 91 to 111 (FLFHLAVADLLLVFILPFAVA). At 112 to 126 (EGSVGWVLGTFLCKT) the chain is on the extracellular side. Residues Cys-124 and Cys-204 are joined by a disulfide bond. Residues 127 to 147 (VIALHKINFYCSSLLLACIAV) traverse the membrane as a helical segment. Residues 148–169 (DRYLAIVHAVHAYRRRRLLSIH) are Cytoplasmic-facing. A helical membrane pass occupies residues 170–190 (ITCSTIWLAGFLFALPELLFA). Topologically, residues 191–221 (KVVQPHNNESLPQCIFSQENEAETRAWFASR) are extracellular. A glycan (N-linked (GlcNAc...) asparagine) is linked at Asn-198. The helical transmembrane segment at 222–242 (FLYHTGGFLLPMLVMAWCYVG) threads the bilayer. Residues 243–261 (VVHRLLQAQRRPQRQKAVR) are Cytoplasmic-facing. The helical transmembrane segment at 262-282 (VAILVTSIFLLCWSPYHIVIF) threads the bilayer. Topologically, residues 283–306 (LDTLERLKAVNSSCELSGYLSVAI) are extracellular. A helical membrane pass occupies residues 307–327 (TLCEFLGLAHCCLNPMLYTFA). Residues 328–374 (GVKFRSDLSRLLTKLGCAGPASLCQLFPGWRKSSLSESENATSLTTF) are Cytoplasmic-facing.

The protein belongs to the G-protein coupled receptor 1 family. Expressed in neuronal and lymphatic tissue.

The protein localises to the cell membrane. In terms of biological role, cytokine receptor that binds to B-lymphocyte chemoattractant (BLC). Involved in B-cell migration into B-cell follicles of spleen and Peyer patches but not into those of mesenteric or peripheral lymph nodes. The protein is C-X-C chemokine receptor type 5 (Cxcr5) of Rattus norvegicus (Rat).